The primary structure comprises 314 residues: MPLDVVVVMDPITGIKIAKDTTFALLLEAQRRSHRLHYVHPGSLSLNEGRTFAQTAPLQVRDNKTDWYTLGEFSETQLGQGQIILMRKDPPVNAEFIYDTQLLSIAQAAGAQVINHPQGLRDLNEKIAAQLFPQCCPPTLISRDMRALKMFVQKQEQAILKPLDGMGGHSIFRSSNGDPNLNVILETLTDGGRTLAIAQRYLQQIIEGDKRILLIDGVPIDHCLARIPQGDEFRGNMAAGGRGESRPLNERDRWIAAQVGPEMRRRGMRFVGIDVIGDYLTEINVTSPTCLRELDAQCGLNIAGQLFDAIETGG.

One can recognise an ATP-grasp domain in the interval 125 to 311; that stretch reads EKIAAQLFPQ…IAGQLFDAIE (187 aa). 151 to 208 lines the ATP pocket; that stretch reads FVQKQEQAILKPLDGMGGHSIFRSSNGDPNLNVILETLTDGGRTLAIAQRYLQQIIEG. Mg(2+)-binding residues include Glu-282 and Asn-284.

It belongs to the prokaryotic GSH synthase family. Mg(2+) is required as a cofactor. Requires Mn(2+) as cofactor.

It carries out the reaction gamma-L-glutamyl-L-cysteine + glycine + ATP = glutathione + ADP + phosphate + H(+). Its pathway is sulfur metabolism; glutathione biosynthesis; glutathione from L-cysteine and L-glutamate: step 2/2. This is Glutathione synthetase from Xylella fastidiosa (strain Temecula1 / ATCC 700964).